The primary structure comprises 212 residues: Putative tyrosine-protein phosphatase R622 (212 aa).

In terms of domain architecture, Tyrosine-protein phosphatase spans 9-191 (KISQVTNNIF…LQGYQSKKEN (183 aa)). Cysteine 135 (phosphocysteine intermediate) is an active-site residue.

It belongs to the protein-tyrosine phosphatase family. Non-receptor class dual specificity subfamily.

It catalyses the reaction O-phospho-L-tyrosyl-[protein] + H2O = L-tyrosyl-[protein] + phosphate. The protein is Putative tyrosine-protein phosphatase R622 of Acanthamoeba polyphaga mimivirus (APMV).